We begin with the raw amino-acid sequence, 694 residues long: DNA-binding protein RFX2 (694 aa).

A DNA-binding region (RFX-type winged-helix) is located at residues 174–249; sequence HLQWLLDNYE…YHYYGIRLKP (76 aa). 2 disordered regions span residues 267-310 and 658-694; these read QQPI…QHHQ and KDDV…MQEM. Over residues 289 to 299 the composition is skewed to polar residues; that stretch reads PANSSQHASPE. The segment covering 300–310 has biased composition (low complexity); the sequence is QSVAAQSQHHQ.

The protein belongs to the RFX family. In terms of assembly, homodimer. Heterodimer; heterodimerizes with other rfx proteins. In terms of tissue distribution, preferentially expressed in ciliated tissues, such as neural tube, gastrocoel roof plate, epidermal multiciliated cells, otic vesicles and kidneys.

It localises to the nucleus. It is found in the cytoplasm. Transcription factor that acts as a key regulator of ciliogenesis. Specifically regulates expression of genes required for cilium assembly and function. Recognizes and binds the X-box, a regulatory motif with DNA sequence 5'-GTNRCC(0-3N)RGYAAC-3' present on promoters. Required for neural tube closure and neural ciliogenesis. The protein is DNA-binding protein RFX2 (rfx2) of Xenopus laevis (African clawed frog).